The primary structure comprises 343 residues: Glyceraldehyde-3-phosphate dehydrogenase (343 aa).

NAD(+) contacts are provided by residues Thr-13–Ile-14 and Gly-111. Ser-140–Asn-142 serves as a coordination point for D-glyceraldehyde 3-phosphate. Cys-141 acts as the Nucleophile in catalysis. Arg-169 contributes to the NAD(+) binding site. Residue His-195–Ala-196 coordinates D-glyceraldehyde 3-phosphate. Gln-303 provides a ligand contact to NAD(+).

The protein belongs to the glyceraldehyde-3-phosphate dehydrogenase family. Homotetramer.

It is found in the cytoplasm. The enzyme catalyses D-glyceraldehyde 3-phosphate + phosphate + NADP(+) = (2R)-3-phospho-glyceroyl phosphate + NADPH + H(+). The catalysed reaction is D-glyceraldehyde 3-phosphate + phosphate + NAD(+) = (2R)-3-phospho-glyceroyl phosphate + NADH + H(+). The protein operates within carbohydrate degradation; glycolysis; pyruvate from D-glyceraldehyde 3-phosphate: step 1/5. This is Glyceraldehyde-3-phosphate dehydrogenase from Sulfolobus acidocaldarius (strain ATCC 33909 / DSM 639 / JCM 8929 / NBRC 15157 / NCIMB 11770).